We begin with the raw amino-acid sequence, 407 residues long: Peptidase T (407 aa).

Histidine 82 contributes to the Zn(2+) binding site. Residue aspartate 84 is part of the active site. Aspartate 143 is a Zn(2+) binding site. The Proton acceptor role is filled by glutamate 177. Positions 178, 200, and 382 each coordinate Zn(2+).

It belongs to the peptidase M20B family. Zn(2+) serves as cofactor.

The protein localises to the cytoplasm. The enzyme catalyses Release of the N-terminal residue from a tripeptide.. Its function is as follows. Cleaves the N-terminal amino acid of tripeptides. This chain is Peptidase T, found in Streptococcus pyogenes serotype M18 (strain MGAS8232).